Reading from the N-terminus, the 64-residue chain is Large ribosomal subunit protein bL35 (64 aa).

Positions 19-41 (SGKVKRERMNGSHNLEHKNRKRT) are disordered. A compositionally biased stretch (basic and acidic residues) spans 25–35 (ERMNGSHNLEH).

This sequence belongs to the bacterial ribosomal protein bL35 family.

In Chlorobaculum tepidum (strain ATCC 49652 / DSM 12025 / NBRC 103806 / TLS) (Chlorobium tepidum), this protein is Large ribosomal subunit protein bL35.